Here is a 390-residue protein sequence, read N- to C-terminus: Phosphopentomutase (390 aa).

Aspartate 14, aspartate 286, histidine 291, aspartate 327, histidine 328, and histidine 339 together coordinate Mn(2+).

This sequence belongs to the phosphopentomutase family. The cofactor is Mn(2+).

Its subcellular location is the cytoplasm. The catalysed reaction is 2-deoxy-alpha-D-ribose 1-phosphate = 2-deoxy-D-ribose 5-phosphate. It carries out the reaction alpha-D-ribose 1-phosphate = D-ribose 5-phosphate. It participates in carbohydrate degradation; 2-deoxy-D-ribose 1-phosphate degradation; D-glyceraldehyde 3-phosphate and acetaldehyde from 2-deoxy-alpha-D-ribose 1-phosphate: step 1/2. Functionally, isomerase that catalyzes the conversion of deoxy-ribose 1-phosphate (dRib-1-P) and ribose 1-phosphate (Rib-1-P) to deoxy-ribose 5-phosphate (dRib-5-P) and ribose 5-phosphate (Rib-5-P), respectively. The chain is Phosphopentomutase from Exiguobacterium sibiricum (strain DSM 17290 / CCUG 55495 / CIP 109462 / JCM 13490 / 255-15).